Consider the following 376-residue polypeptide: 26S proteasome non-ATPase regulatory subunit 13 (376 aa).

The region spanning 171 to 338 (SYYKDALRFL…KRVHMTWVQP (168 aa)) is the PCI domain.

The protein belongs to the proteasome subunit S11 family. Component of the 19S proteasome regulatory particle complex. The 26S proteasome consists of a 20S core particle (CP) and two 19S regulatory subunits (RP). The regulatory particle is made of a lid composed of 9 subunits including PSMD13, a base containing 6 ATPases and few additional components.

Component of the 26S proteasome, a multiprotein complex involved in the ATP-dependent degradation of ubiquitinated proteins. This complex plays a key role in the maintenance of protein homeostasis by removing misfolded or damaged proteins, which could impair cellular functions, and by removing proteins whose functions are no longer required. Therefore, the proteasome participates in numerous cellular processes, including cell cycle progression, apoptosis, or DNA damage repair. This Bos taurus (Bovine) protein is 26S proteasome non-ATPase regulatory subunit 13 (PSMD13).